Consider the following 199-residue polypeptide: FMN-dependent NADH:quinone oxidoreductase 2 (199 aa).

FMN-binding positions include serine 10, 17 to 19, and 135 to 138; these read SDS and TKGG.

The protein belongs to the azoreductase type 1 family. Homodimer. The cofactor is FMN.

It carries out the reaction 2 a quinone + NADH + H(+) = 2 a 1,4-benzosemiquinone + NAD(+). It catalyses the reaction N,N-dimethyl-1,4-phenylenediamine + anthranilate + 2 NAD(+) = 2-(4-dimethylaminophenyl)diazenylbenzoate + 2 NADH + 2 H(+). Its function is as follows. Quinone reductase that provides resistance to thiol-specific stress caused by electrophilic quinones. In terms of biological role, also exhibits azoreductase activity. Catalyzes the reductive cleavage of the azo bond in aromatic azo compounds to the corresponding amines. The chain is FMN-dependent NADH:quinone oxidoreductase 2 from Mesoplasma florum (strain ATCC 33453 / NBRC 100688 / NCTC 11704 / L1) (Acholeplasma florum).